A 607-amino-acid polypeptide reads, in one-letter code: uncharacterized protein (607 aa).

The segment at residues 16 to 44 is a DNA-binding region (zn(2)-C6 fungal-type); sequence CTVCRKRKLKCDGNKPCGRCIRLNTPKEC.

It localises to the nucleus. This is an uncharacterized protein from Saccharomyces cerevisiae (strain ATCC 204508 / S288c) (Baker's yeast).